The primary structure comprises 328 residues: Formimidoylglutamase (328 aa).

Mn(2+) contacts are provided by His-133, Asp-159, His-161, Asp-163, Asp-253, and Asp-255.

This sequence belongs to the arginase family. The cofactor is Mn(2+).

The enzyme catalyses N-formimidoyl-L-glutamate + H2O = formamide + L-glutamate. Its pathway is amino-acid degradation; L-histidine degradation into L-glutamate; L-glutamate from N-formimidoyl-L-glutamate (hydrolase route): step 1/1. Functionally, catalyzes the conversion of N-formimidoyl-L-glutamate to L-glutamate and formamide. In Streptococcus pyogenes serotype M5 (strain Manfredo), this protein is Formimidoylglutamase.